Here is a 164-residue protein sequence, read N- to C-terminus: UPF0114 protein YqhA (164 aa).

The next 3 membrane-spanning stretches (helical) occupy residues 15–35 (LLAP…LKFF), 53–73 (LILV…LVMV), and 136–156 (LMWY…MGYL).

This sequence belongs to the UPF0114 family.

It is found in the cell membrane. This Escherichia coli O6:H1 (strain CFT073 / ATCC 700928 / UPEC) protein is UPF0114 protein YqhA.